The chain runs to 176 residues: Cytochrome b (176 aa).

3 helical membrane passes run 33-53, 77-98, and 113-133; these read FGSLLGICLALQILTGIFLAM, WVLRYLHANGASMFFICLYLHV, and WNMGVILLFAVMATAFMGYVL. Heme b is bound by residues His83 and His97.

The protein belongs to the cytochrome b family. As to quaternary structure, the cytochrome bc1 complex contains 11 subunits: 3 respiratory subunits (MT-CYB, CYC1 and UQCRFS1), 2 core proteins (UQCRC1 and UQCRC2) and 6 low-molecular weight proteins (UQCRH/QCR6, UQCRB/QCR7, UQCRQ/QCR8, UQCR10/QCR9, UQCR11/QCR10 and a cleavage product of UQCRFS1). This cytochrome bc1 complex then forms a dimer. Heme b serves as cofactor.

It is found in the mitochondrion inner membrane. In terms of biological role, component of the ubiquinol-cytochrome c reductase complex (complex III or cytochrome b-c1 complex) that is part of the mitochondrial respiratory chain. The b-c1 complex mediates electron transfer from ubiquinol to cytochrome c. Contributes to the generation of a proton gradient across the mitochondrial membrane that is then used for ATP synthesis. This chain is Cytochrome b (MT-CYB), found in Lasionycteris noctivagans (Silver-haired bat).